The chain runs to 211 residues: Octanoyltransferase (211 aa).

Residues 32 to 211 (DHEPEIIYLV…IQTEFNKIFK (180 aa)) enclose the BPL/LPL catalytic domain. Substrate-binding positions include 71–78 (RGGKFTFH), 145–147 (AIG), and 158–160 (GVA). C176 serves as the catalytic Acyl-thioester intermediate.

It belongs to the LipB family.

It localises to the cytoplasm. It catalyses the reaction octanoyl-[ACP] + L-lysyl-[protein] = N(6)-octanoyl-L-lysyl-[protein] + holo-[ACP] + H(+). The protein operates within protein modification; protein lipoylation via endogenous pathway; protein N(6)-(lipoyl)lysine from octanoyl-[acyl-carrier-protein]: step 1/2. In terms of biological role, catalyzes the transfer of endogenously produced octanoic acid from octanoyl-acyl-carrier-protein onto the lipoyl domains of lipoate-dependent enzymes. Lipoyl-ACP can also act as a substrate although octanoyl-ACP is likely to be the physiological substrate. This Rickettsia massiliae (strain Mtu5) protein is Octanoyltransferase.